The following is a 1121-amino-acid chain: Peroxisomal ATPase PEX1 (1121 aa).

Disordered stretches follow at residues 187–221 and 1099–1121; these read SISS…NNGE and SGRD…STLM. A compositionally biased stretch (low complexity) spans 205–217; the sequence is SSTSTATGRRSVT.

The protein belongs to the AAA ATPase family. As to quaternary structure, interacts with PEX6; forming the PEX1-PEX6 AAA ATPase complex, which is composed of a heterohexamer formed by a trimer of PEX1-PEX6 dimers.

The protein localises to the membrane. The enzyme catalyses ATP + H2O = ADP + phosphate + H(+). Functionally, component of the PEX1-PEX6 AAA ATPase complex involved in peroxisome biosynthesis. The complex acts as a protein dislocase complex that mediates the ATP-dependent extraction of the PEX5 receptor from peroxisomal membranes, an essential step for PEX5 recycling. Specifically recognizes PEX5 monoubiquitinated at 'Cys-6', and pulls it out of the peroxisome lumen through the PEX2-PEX10-PEX12 retrotranslocation channel. Extraction by the PEX1-PEX6 AAA ATPase complex is accompanied by unfolding of the TPR repeats and release of bound cargo from PEX5. This chain is Peroxisomal ATPase PEX1, found in Komagataella phaffii (strain GS115 / ATCC 20864) (Yeast).